Consider the following 198-residue polypeptide: Autophagy-related protein 16 (198 aa).

Residues 24–177 adopt a coiled-coil conformation; the sequence is ELVQTCSQMA…NKELVDRWMK (154 aa).

It belongs to the ATG16 family. Homodimer. Part of the ATG5-ATG12/ATG16 complex. Several units of each may be present in this complex. Interacts directly with ATG12.

The protein localises to the preautophagosomal structure membrane. In terms of biological role, stabilizes the ATG5-ATG12 conjugate. The ATG5-ATG12/ATG16 complex is required for efficient promotion of ATG8-conjugation to phosphatidylethanolamine and ATG8 localization to the pre-autophagosomal structure (PAS). Also recruits ATG3 to the PAS. Involved in endoplasmic reticulum-specific autophagic process and is essential for the survival of cells subjected to severe ER stress. Autophagy is required for proper vegetative growth, asexual/sexual reproduction, and full virulence. Autophagy is particularly involved in the biosynthesis of deoxynivalenol (DON), an important virulence determinant. This chain is Autophagy-related protein 16, found in Gibberella zeae (strain ATCC MYA-4620 / CBS 123657 / FGSC 9075 / NRRL 31084 / PH-1) (Wheat head blight fungus).